The chain runs to 266 residues: Glutamate racemase (266 aa).

Residues 9-10 (DS) and 41-42 (YG) contribute to the substrate site. Cysteine 72 acts as the Proton donor/acceptor in catalysis. 73 to 74 (NT) is a binding site for substrate. Cysteine 184 serves as the catalytic Proton donor/acceptor. 185-186 (TH) provides a ligand contact to substrate.

Belongs to the aspartate/glutamate racemases family.

The enzyme catalyses L-glutamate = D-glutamate. Its pathway is cell wall biogenesis; peptidoglycan biosynthesis. Its function is as follows. Provides the (R)-glutamate required for cell wall biosynthesis. In Staphylococcus aureus (strain Mu3 / ATCC 700698), this protein is Glutamate racemase.